We begin with the raw amino-acid sequence, 723 residues long: Malate synthase G (723 aa).

Residues V118, 125–126 (RY), S274, and R311 contribute to the acetyl-CoA site. R338 (proton acceptor) is an active-site residue. Residues R338, E427, and 452–455 (GFLD) contribute to the glyoxylate site. Residues E427 and D455 each contribute to the Mg(2+) site. P536 is a binding site for acetyl-CoA. Residue C617 is modified to Cysteine sulfenic acid (-SOH). Catalysis depends on D631, which acts as the Proton donor. C688 is modified (cysteine sulfenic acid (-SOH)).

This sequence belongs to the malate synthase family. GlcB subfamily. In terms of assembly, monomer. Mg(2+) serves as cofactor.

It is found in the cytoplasm. It catalyses the reaction glyoxylate + acetyl-CoA + H2O = (S)-malate + CoA + H(+). It functions in the pathway carbohydrate metabolism; glyoxylate cycle; (S)-malate from isocitrate: step 2/2. Functionally, involved in the glycolate utilization. Catalyzes the condensation and subsequent hydrolysis of acetyl-coenzyme A (acetyl-CoA) and glyoxylate to form malate and CoA. The protein is Malate synthase G of Escherichia coli O6:H1 (strain CFT073 / ATCC 700928 / UPEC).